We begin with the raw amino-acid sequence, 256 residues long: Chlorophyll a-b binding protein CP24 10B, chloroplastic (256 aa).

The N-terminal 45 residues, 1–45 (MTTTSATAVLNGLSSSFLTGGKKTQALLGAHVTARVTTPKRFVVA), are a transit peptide targeting the chloroplast. The next 2 helical transmembrane spans lie at 106 to 126 (WAMA…IPWF) and 134 to 154 (AIAP…MGWV).

Belongs to the ELIP/psbS family.

The protein localises to the plastid. Its subcellular location is the chloroplast thylakoid membrane. The chain is Chlorophyll a-b binding protein CP24 10B, chloroplastic (CAP10B) from Solanum lycopersicum (Tomato).